The chain runs to 305 residues: Porphobilinogen deaminase (305 aa).

An S-(dipyrrolylmethanemethyl)cysteine modification is found at cysteine 238.

It belongs to the HMBS family. As to quaternary structure, monomer. Requires dipyrromethane as cofactor.

The catalysed reaction is 4 porphobilinogen + H2O = hydroxymethylbilane + 4 NH4(+). The protein operates within porphyrin-containing compound metabolism; protoporphyrin-IX biosynthesis; coproporphyrinogen-III from 5-aminolevulinate: step 2/4. Functionally, tetrapolymerization of the monopyrrole PBG into the hydroxymethylbilane pre-uroporphyrinogen in several discrete steps. The polypeptide is Porphobilinogen deaminase (Rubrobacter xylanophilus (strain DSM 9941 / JCM 11954 / NBRC 16129 / PRD-1)).